Reading from the N-terminus, the 146-residue chain is Aminoglycoside N(6')-acetyltransferase type 1 (146 aa).

Residues 1–146 form the N-acetyltransferase domain; it reads MIVICDHDNL…RVVFYRKTLG (146 aa). Residues W21, Y66, E79, and D115 each coordinate substrate. An acetyl-CoA-binding site is contributed by N120. E136 lines the substrate pocket.

As to quaternary structure, homodimer.

The catalysed reaction is kanamycin B + acetyl-CoA = N(6')-acetylkanamycin B + CoA + H(+). Functionally, catalyzes the transfer of an acetyl group from acetyl-CoA to the 6'-amino group of aminoglycoside molecules conferring resistance to antibiotics containing the purpurosamine ring including amikacin, tobramycin, netilmicin, isepamicin and sisomicin. The protein is Aminoglycoside N(6')-acetyltransferase type 1 of Serratia marcescens.